A 147-amino-acid polypeptide reads, in one-letter code: Large ribosomal subunit protein uL22 (147 aa).

The protein belongs to the universal ribosomal protein uL22 family. Part of the 50S ribosomal subunit.

Its function is as follows. This protein binds specifically to 23S rRNA; its binding is stimulated by other ribosomal proteins, e.g. L4, L17, and L20. It is important during the early stages of 50S assembly. It makes multiple contacts with different domains of the 23S rRNA in the assembled 50S subunit and ribosome. In terms of biological role, the globular domain of the protein is located near the polypeptide exit tunnel on the outside of the subunit, while an extended beta-hairpin is found that lines the wall of the exit tunnel in the center of the 70S ribosome. The polypeptide is Large ribosomal subunit protein uL22 (Fervidobacterium nodosum (strain ATCC 35602 / DSM 5306 / Rt17-B1)).